Reading from the N-terminus, the 194-residue chain is RxLR effector protein Avh240 (194 aa).

The N-terminal stretch at 1–23 (MRPYFTLLLALAFILACTNLVEA) is a signal peptide. The short motif at 38 to 57 (RHLRTAVASVVDLPDDEDER) is the RxLR-dEER element. The interval 58 to 108 (LLGYNTVQLWRMRRTANKLMNGKLTTQKEAALKKWMASQQDKFLAKWLKSS) is host plasma membrane-binding.

The protein belongs to the RxLR effector family. In terms of assembly, homodimer. Interacts with host soybean aspartic protease AP1.

It localises to the secreted. The protein resides in the host cell membrane. In terms of biological role, effector that suppresses plant defense responses during the early stages of pathogen infection. Suppresses cell death induced by effectors and PAMPs in plant hosts. Avh240 dimerizes and localizes at the plasma membrane to interfere with aspartic protease AP1 secretion, which presents an effective mechanism by which effector proteins suppress plant apoplastic immunity. The sequence is that of RxLR effector protein Avh240 from Phytophthora sojae (Soybean stem and root rot agent).